The sequence spans 176 residues: Avian agnoprotein 1a (176 aa).

Disordered regions lie at residues 1–85 (MSTP…GKLE) and 116–176 (VYAA…RPAR). Residues 75–85 (YDRQNRFGKLE) show a composition bias toward basic and acidic residues. Residues 76-119 (DRQNRFGKLESEIRETKSQLETLRQELKHLQADVDDLKETVYAA) are a coiled coil. The segment covering 137 to 161 (TPTATTPEASPAAPTTESTETTGPS) has biased composition (low complexity).

As to quaternary structure, interacts with VP1.

Its subcellular location is the virion. It is found in the host nucleus. This chain is Avian agnoprotein 1a, found in Budgerigar fledgling disease virus (BFPyV).